The chain runs to 169 residues: Spore protein SP21 (169 aa).

2 disordered regions span residues 1-21 and 150-169; these read MADL…REWD and QPKR…HIKA. The region spanning 47–159 is the sHSP domain; the sequence is QGPPAFVPAF…QPKRIQVASS (113 aa).

This sequence belongs to the small heat shock protein (HSP20) family.

Its function is as follows. May stabilize cellular components during stress and spore formation. This Stigmatella aurantiaca (strain DW4/3-1) protein is Spore protein SP21 (hspA).